Consider the following 470-residue polypeptide: Origin of replication complex subunit 4 (470 aa).

Position 63–70 (63–70 (GPRGCGKA)) interacts with ATP.

It belongs to the ORC4 family. In terms of assembly, component of the origin recognition complex (ORC) composed of at least ORC1, ORC2, ORC3, ORC4, ORC5 and ORC6. ORC is regulated in a cell-cycle and development dependent manner. It is sequentially assembled at the exit from anaphase of mitosis and disassembled as cells enter S phase. In terms of tissue distribution, expressed in the shoot apical meristem (SAM), leaves, ears and roots (including root tips).

It is found in the nucleus. Functionally, component of the origin recognition complex (ORC) that binds origins of replication. DNA-binding is ATP-dependent. The specific DNA sequences that define origins of replication have not been identified yet. ORC is required to assemble the pre-replication complex necessary to initiate DNA replication. The chain is Origin of replication complex subunit 4 from Oryza sativa subsp. japonica (Rice).